The following is a 219-amino-acid chain: Charged multivesicular body protein 5 (219 aa).

Residues 22-153 (TNVDGRAESI…EIQEALSRSY (132 aa)) are a coiled coil.

The protein belongs to the SNF7 family. In terms of assembly, probable peripherally associated component of the endosomal sorting required for transport complex III (ESCRT-III).

The protein resides in the cytoplasm. The protein localises to the cytosol. It localises to the endosome membrane. In terms of biological role, probable peripherally associated component of the endosomal sorting required for transport complex III (ESCRT-III) which is involved in multivesicular bodies (MVBs) formation and sorting of endosomal cargo proteins into MVBs. MVBs contain intraluminal vesicles (ILVs) that are generated by invagination and scission from the limiting membrane of the endosome and mostly are delivered to lysosomes enabling degradation of membrane proteins, such as stimulated growth factor receptors, lysosomal enzymes and lipids. The sequence is that of Charged multivesicular body protein 5 (chmp5) from Xenopus laevis (African clawed frog).